The primary structure comprises 463 residues: Mitochondrial dynamics protein MID51 (463 aa).

Residues 1 to 23 (MAGAGERKGKKDDNGIGTAIDFV) lie on the Mitochondrial intermembrane side of the membrane. A helical membrane pass occupies residues 24–46 (LSNARLVLGVGGAAMLGIATLAV). Residues 47 to 463 (KRMYDRAISA…LSEPEVLLQT (417 aa)) lie on the Cytoplasmic side of the membrane. The interval 49–195 (MYDRAISAPT…LSGSLYDDLQ (147 aa)) is dimerization. Ser55, Ser59, Ser79, and Ser94 each carry phosphoserine. Residues 57-77 (PTSPTRLSHSGKRSWEEPNWM) are disordered. The segment at 160-169 (AAVDICAELR) is important for interaction with DNM1L. ADP is bound by residues Ser187, Ser189, and His201. The interval 234–243 (RRENPEYFPR) is important for interaction with DNM1L. 3 residues coordinate ADP: Ser340, Arg342, and Lys368.

The protein belongs to the MID49/MID51 family. In terms of assembly, homodimer. Interacts with DNM1L.

The protein localises to the mitochondrion outer membrane. In terms of biological role, mitochondrial outer membrane protein which regulates mitochondrial fission/fusion dynamics. Promotes the recruitment and association of the fission mediator dynamin-related protein 1 (DNM1L) to the mitochondrial surface independently of the mitochondrial fission FIS1 and MFF proteins. Regulates DNM1L GTPase activity and DNM1L oligomerization. Binds ADP and can also bind GDP, although with lower affinity. Does not bind CDP, UDP, ATP, AMP or GTP. Inhibits DNM1L GTPase activity in the absence of bound ADP. Requires ADP to stimulate DNM1L GTPase activity and the assembly of DNM1L into long, oligomeric tubules with a spiral pattern, as opposed to the ring-like DNM1L oligomers observed in the absence of bound ADP. Does not require ADP for its function in recruiting DNM1L. This is Mitochondrial dynamics protein MID51 (Mief1) from Rattus norvegicus (Rat).